The primary structure comprises 300 residues: Bifunctional protein FolD 2 (300 aa).

NADP(+)-binding positions include 165–167 (GRS), serine 190, and isoleucine 231.

Belongs to the tetrahydrofolate dehydrogenase/cyclohydrolase family. As to quaternary structure, homodimer.

The catalysed reaction is (6R)-5,10-methylene-5,6,7,8-tetrahydrofolate + NADP(+) = (6R)-5,10-methenyltetrahydrofolate + NADPH. It carries out the reaction (6R)-5,10-methenyltetrahydrofolate + H2O = (6R)-10-formyltetrahydrofolate + H(+). It functions in the pathway one-carbon metabolism; tetrahydrofolate interconversion. In terms of biological role, catalyzes the oxidation of 5,10-methylenetetrahydrofolate to 5,10-methenyltetrahydrofolate and then the hydrolysis of 5,10-methenyltetrahydrofolate to 10-formyltetrahydrofolate. In Pseudomonas savastanoi pv. phaseolicola (strain 1448A / Race 6) (Pseudomonas syringae pv. phaseolicola (strain 1448A / Race 6)), this protein is Bifunctional protein FolD 2.